The chain runs to 250 residues: tRNA pseudouridine synthase A (250 aa).

Aspartate 53 (nucleophile) is an active-site residue. Tyrosine 111 is a binding site for substrate.

Belongs to the tRNA pseudouridine synthase TruA family. As to quaternary structure, homodimer.

It catalyses the reaction uridine(38/39/40) in tRNA = pseudouridine(38/39/40) in tRNA. Its function is as follows. Formation of pseudouridine at positions 38, 39 and 40 in the anticodon stem and loop of transfer RNAs. This chain is tRNA pseudouridine synthase A, found in Streptococcus uberis (strain ATCC BAA-854 / 0140J).